The following is a 141-amino-acid chain: Large ribosomal subunit protein uL11 (141 aa).

The segment at 1-23 (MAKQVTGQAKFQVPGGQATPAPP) is disordered.

It belongs to the universal ribosomal protein uL11 family. In terms of assembly, part of the ribosomal stalk of the 50S ribosomal subunit. Interacts with L10 and the large rRNA to form the base of the stalk. L10 forms an elongated spine to which L12 dimers bind in a sequential fashion forming a multimeric L10(L12)X complex. One or more lysine residues are methylated.

In terms of biological role, forms part of the ribosomal stalk which helps the ribosome interact with GTP-bound translation factors. The chain is Large ribosomal subunit protein uL11 from Rhodopirellula baltica (strain DSM 10527 / NCIMB 13988 / SH1).